The chain runs to 393 residues: Dual specificity mitogen-activated protein kinase kinase 1 (393 aa).

The interval 1-27 (MPKKKPTPIQLNPAPDGSAVNGTSSAE) is disordered. The 294-residue stretch at 68-361 (FEKISELGAG…LKQLMVHAFI (294 aa)) folds into the Protein kinase domain. ATP is bound by residues 74-82 (LGAGNGGVV) and K97. D190 (proton acceptor) is an active-site residue. Phosphoserine; by RAF is present on residues S218 and S222. An RAF1-binding region spans residues 270 to 307 (ELELLFGCQVEGDAAETPPRPRTPGRPLSSYGMDSRPP). Residue T286 is modified to Phosphothreonine. At T292 the chain carries Phosphothreonine; by MAPK1. Residue S298 is modified to Phosphoserine; by PAK.

Belongs to the protein kinase superfamily. STE Ser/Thr protein kinase family. MAP kinase kinase subfamily. As to quaternary structure, found in a complex with at least BRAF, HRAS, MAP2K1, MAPK3/ERK1 and RGS14. Forms a heterodimer with MAP2K2/MEK2. Forms heterodimers with KSR2 which further dimerize to form tetramers. Interacts with KSR1 or KSR2 and BRAF; the interaction with KSR1 or KSR2 mediates KSR1-BRAF or KSR2-BRAF dimerization. Interacts with ARBB2, LAMTOR3, MAPK1/ERK2 and RAF1. Interacts with MAPK1/ERK2. Interacts with MORG1. Interacts with PPARG. Interacts with VRK2. Interacts with SGK1. Interacts with BIRC6/bruce. Interacts with KAT7; the interaction promotes KAT7 phosphorylation. Interacts with RAF1 and NEK10; the interaction is required for ERK1/2-signaling pathway activation in response to UV irradiation. Interacts with TRAF3IP3. Interacts with MOS. In terms of processing, phosphorylation at Ser-218 and Ser-222 by MAP kinase kinase kinases (BRAF or MEKK1) positively regulates kinase activity. Also phosphorylated at Thr-292 by MAPK1/ERK2 and at Ser-298 by PAK. MAPK1/ERK2 phosphorylation of Thr-292 occurs in response to cellular adhesion and leads to inhibition of Ser-298 phosphorylation by PAK. Autophosphorylated at Ser-218 and Ser-222, autophosphosphorylation is promoted by NEK10 following UV irradiation.

It is found in the cytoplasm. Its subcellular location is the cytoskeleton. It localises to the microtubule organizing center. The protein resides in the centrosome. The protein localises to the spindle pole body. It is found in the nucleus. Its subcellular location is the membrane. The catalysed reaction is L-seryl-[protein] + ATP = O-phospho-L-seryl-[protein] + ADP + H(+). The enzyme catalyses L-threonyl-[protein] + ATP = O-phospho-L-threonyl-[protein] + ADP + H(+). It catalyses the reaction L-tyrosyl-[protein] + ATP = O-phospho-L-tyrosyl-[protein] + ADP + H(+). Ras proteins such as HRAS mediate the activation of RAF proteins such as RAF1 or BRAF which in turn activate extracellular signal-regulated kinases (ERK) through MAPK (mitogen-activated protein kinases) and ERK kinases MAP2K1/MEK1 and MAP2K2/MEK2. Activation occurs through phosphorylation of Ser-218 and Ser-222. MAP2K1/MEK1 binds KSR1 or KSR2 releasing the inhibitory intramolecular interaction between KSR1 or KSR2 protein kinase and N-terminal domains. This allows KSR1 or KSR2 dimerization with BRAF leading to BRAF activation and phosphorylation of MAP2K1. MAP2K1/MEK1 is also the target of negative feed-back regulation by its substrate kinases, such as MAPK1/ERK2. These phosphorylate MAP2K1/MEK1 on Thr-292, thereby facilitating dephosphorylation of the activating residues Ser-218 and Ser-222. Inhibited by serine/threonine phosphatase 2A. Dual specificity protein kinase which acts as an essential component of the MAP kinase signal transduction pathway. Binding of extracellular ligands such as growth factors, cytokines and hormones to their cell-surface receptors activates RAS and this initiates RAF1 activation. RAF1 then further activates the dual-specificity protein kinases MAP2K1/MEK1 and MAP2K2/MEK2. Both MAP2K1/MEK1 and MAP2K2/MEK2 function specifically in the MAPK/ERK cascade, and catalyze the concomitant phosphorylation of a threonine and a tyrosine residue in a Thr-Glu-Tyr sequence located in the extracellular signal-regulated kinases MAPK3/ERK1 and MAPK1/ERK2, leading to their activation and further transduction of the signal within the MAPK/ERK cascade. Activates BRAF in a KSR1 or KSR2-dependent manner; by binding to KSR1 or KSR2 releases the inhibitory intramolecular interaction between KSR1 or KSR2 protein kinase and N-terminal domains which promotes KSR1 or KSR2-BRAF dimerization and BRAF activation. Depending on the cellular context, this pathway mediates diverse biological functions such as cell growth, adhesion, survival and differentiation, predominantly through the regulation of transcription, metabolism and cytoskeletal rearrangements. One target of the MAPK/ERK cascade is peroxisome proliferator-activated receptor gamma (PPARG), a nuclear receptor that promotes differentiation and apoptosis. MAP2K1/MEK1 has been shown to export PPARG from the nucleus. The MAPK/ERK cascade is also involved in the regulation of endosomal dynamics, including lysosome processing and endosome cycling through the perinuclear recycling compartment (PNRC), as well as in the fragmentation of the Golgi apparatus during mitosis. The sequence is that of Dual specificity mitogen-activated protein kinase kinase 1 from Rattus norvegicus (Rat).